Reading from the N-terminus, the 95-residue chain is uncharacterized protein (95 aa).

A helical membrane pass occupies residues leucine 29–leucine 53.

It is found in the membrane. This is an uncharacterized protein from Schizosaccharomyces pombe (strain 972 / ATCC 24843) (Fission yeast).